Here is a 543-residue protein sequence, read N- to C-terminus: Probable protein kinase UbiB (543 aa).

The region spanning 123-501 is the Protein kinase domain; it reads DFDSQALASA…GSRQGRARYL (379 aa). ATP-binding positions include 129-137 and Lys152; that span reads LASASIAQV. Asp287 serves as the catalytic Proton acceptor. Residues 517 to 537 form a helical membrane-spanning segment; it reads MVNIALWPIGLYVAGGVIWLA.

Belongs to the ABC1 family. UbiB subfamily.

The protein resides in the cell inner membrane. It functions in the pathway cofactor biosynthesis; ubiquinone biosynthesis [regulation]. Its function is as follows. Is probably a protein kinase regulator of UbiI activity which is involved in aerobic coenzyme Q (ubiquinone) biosynthesis. This is Probable protein kinase UbiB from Edwardsiella ictaluri (strain 93-146).